A 284-amino-acid polypeptide reads, in one-letter code: uncharacterized protein (284 aa).

The C3H1-type zinc finger occupies 37–65 (NEKKLICFSIINGENCIYGPNCTYAHSLS).

This is an uncharacterized protein from Acanthamoeba polyphaga (Amoeba).